Reading from the N-terminus, the 434-residue chain is Nicotinate phosphoribosyltransferase (434 aa).

His242 is subject to Phosphohistidine; by autocatalysis.

Belongs to the NAPRTase family. In terms of processing, transiently phosphorylated on a His residue during the reaction cycle. Phosphorylation strongly increases the affinity for substrates and increases the rate of nicotinate D-ribonucleotide production. Dephosphorylation regenerates the low-affinity form of the enzyme, leading to product release.

The catalysed reaction is nicotinate + 5-phospho-alpha-D-ribose 1-diphosphate + ATP + H2O = nicotinate beta-D-ribonucleotide + ADP + phosphate + diphosphate. The protein operates within cofactor biosynthesis; NAD(+) biosynthesis; nicotinate D-ribonucleotide from nicotinate: step 1/1. Catalyzes the synthesis of beta-nicotinate D-ribonucleotide from nicotinate and 5-phospho-D-ribose 1-phosphate at the expense of ATP. In Sinorhizobium fredii (strain NBRC 101917 / NGR234), this protein is Nicotinate phosphoribosyltransferase.